The primary structure comprises 609 residues: Sterol O-acyltransferase 2 (609 aa).

A compositionally biased stretch (polar residues) spans 1–15 (MGRTNTSDQLNAISD). A disordered region spans residues 1 to 41 (MGRTNTSDQLNAISDKNTKRKSLALDNEYHNNSSSEDDSSK). The next 6 membrane-spanning stretches (helical) occupy residues 152 to 172 (FFGM…NNLI), 195 to 215 (LFKV…AFFV), 229 to 249 (VGWW…LWIA), 253 to 273 (CLDF…VFIM), 402 to 422 (WSYV…MILI), and 451 to 471 (FLLM…FFLI). An FYXDWWN motif motif is present at residues 490–496 (FYGPWWS). Helical transmembrane passes span 534-554 (AAII…YVIF) and 589-609 (IICW…YLVF). Residue histidine 546 is part of the active site.

The protein belongs to the membrane-bound acyltransferase family. Sterol o-acyltransferase subfamily.

The protein resides in the endoplasmic reticulum membrane. With respect to regulation, inhibited by the protoberberine derivative HWY-289 in a non-competitive manner. Inhibited by miconazole. Not inhibited by CI-976, polyoxin D, amphotericin B or nikkomycin Z. Functionally, sterol O-acyltransferase that catalyzes the formation of stery esters. The sequence is that of Sterol O-acyltransferase 2 from Candida albicans (Yeast).